A 127-amino-acid chain; its full sequence is Large ribosomal subunit protein bL12 (127 aa).

Belongs to the bacterial ribosomal protein bL12 family. Homodimer. Part of the ribosomal stalk of the 50S ribosomal subunit. Forms a multimeric L10(L12)X complex, where L10 forms an elongated spine to which 2 to 4 L12 dimers bind in a sequential fashion. Binds GTP-bound translation factors.

In terms of biological role, forms part of the ribosomal stalk which helps the ribosome interact with GTP-bound translation factors. Is thus essential for accurate translation. The protein is Large ribosomal subunit protein bL12 of Thiobacillus denitrificans (strain ATCC 25259 / T1).